The sequence spans 1487 residues: Major viral transcription factor ICP4 homolog (1487 aa).

3 disordered regions span residues 41 to 295 (AAPD…LPPG), 310 to 370 (LAKT…AEEA), and 803 to 1007 (PPTR…HTPR). Over residues 66–75 (VIPPPSPAPE) the composition is skewed to pro residues. Composition is skewed to low complexity over residues 165–193 (PSSA…SSSS) and 201–213 (DGAG…SSSS). Residues 214 to 224 (DDSDSDEGGEE) are compositionally biased toward acidic residues. A compositionally biased stretch (low complexity) spans 235–272 (AAKTPSAAGSPGPSSGGDRPAAGAATPKSCRSGAASPG). Pro residues predominate over residues 273–285 (APAPAPASAPAPS). Low complexity-rich tracts occupy residues 807–829 (SQQP…AEGS), 849–860 (PSSHSQSPQHSQ), and 867–877 (ATTATCCRATQ). The segment covering 878–893 (TNARSRGQQHQPQKAR) has biased composition (polar residues). Residues 920–929 (HGRPRGKSGK) show a composition bias toward basic residues. A compositionally biased stretch (low complexity) spans 938–951 (AAQAGASASFSSSA). Residues 988–1007 (GPDRRGGFRRVPRGDCHTPR) show a composition bias toward basic and acidic residues.

Belongs to the herpesviridae ICP4 family. In terms of processing, a long stretch of serine residues may be a major site of phosphorylation.

It localises to the host nucleus. In terms of biological role, this IE protein is a multifunctional protein capable of migrating to the nucleus, binding to DNA, trans-activating other viral genes, and autoregulating its own synthesis. The protein is Major viral transcription factor ICP4 homolog (IE) of Equus caballus (Horse).